A 63-amino-acid chain; its full sequence is Large ribosomal subunit protein bL28 (63 aa).

This sequence belongs to the bacterial ribosomal protein bL28 family.

This is Large ribosomal subunit protein bL28 from Mycoplasmopsis synoviae (strain 53) (Mycoplasma synoviae).